The primary structure comprises 1407 residues: DNA-directed RNA polymerase subunit beta' (1407 aa).

4 residues coordinate Zn(2+): cysteine 70, cysteine 72, cysteine 85, and cysteine 88. Aspartate 460, aspartate 462, and aspartate 464 together coordinate Mg(2+). Cysteine 814, cysteine 888, cysteine 895, and cysteine 898 together coordinate Zn(2+).

The protein belongs to the RNA polymerase beta' chain family. As to quaternary structure, the RNAP catalytic core consists of 2 alpha, 1 beta, 1 beta' and 1 omega subunit. When a sigma factor is associated with the core the holoenzyme is formed, which can initiate transcription. The cofactor is Mg(2+). Zn(2+) is required as a cofactor.

The catalysed reaction is RNA(n) + a ribonucleoside 5'-triphosphate = RNA(n+1) + diphosphate. Its function is as follows. DNA-dependent RNA polymerase catalyzes the transcription of DNA into RNA using the four ribonucleoside triphosphates as substrates. This Salmonella paratyphi B (strain ATCC BAA-1250 / SPB7) protein is DNA-directed RNA polymerase subunit beta'.